A 185-amino-acid chain; its full sequence is Ribosome-recycling factor (185 aa).

The protein belongs to the RRF family.

It localises to the cytoplasm. In terms of biological role, responsible for the release of ribosomes from messenger RNA at the termination of protein biosynthesis. May increase the efficiency of translation by recycling ribosomes from one round of translation to another. This chain is Ribosome-recycling factor, found in Treponema denticola (strain ATCC 35405 / DSM 14222 / CIP 103919 / JCM 8153 / KCTC 15104).